A 208-amino-acid polypeptide reads, in one-letter code: Probable GTP-binding protein EngB (208 aa).

Residues 18–187 (KQFEICVIGR…FALMKKVVIQ (170 aa)) enclose the EngB-type G domain. GTP is bound by residues 26–33 (GRSNVGKS), 52–56 (GRTQL), 69–72 (DLPG), 135–138 (NKLD), and 166–168 (VSA). 2 residues coordinate Mg(2+): Ser33 and Thr54.

This sequence belongs to the TRAFAC class TrmE-Era-EngA-EngB-Septin-like GTPase superfamily. EngB GTPase family. Mg(2+) serves as cofactor.

Its function is as follows. Necessary for normal cell division and for the maintenance of normal septation. In Ureaplasma parvum serovar 3 (strain ATCC 27815 / 27 / NCTC 11736), this protein is Probable GTP-binding protein EngB.